We begin with the raw amino-acid sequence, 163 residues long: ATP synthase subunit b 1 (163 aa).

The chain crosses the membrane as a helical span at residues 5–25; that stretch reads LDATFFAFVGLVLFLALVVYL.

Belongs to the ATPase B chain family. F-type ATPases have 2 components, F(1) - the catalytic core - and F(0) - the membrane proton channel. F(1) has five subunits: alpha(3), beta(3), gamma(1), delta(1), epsilon(1). F(0) has three main subunits: a(1), b(2) and c(10-14). The alpha and beta chains form an alternating ring which encloses part of the gamma chain. F(1) is attached to F(0) by a central stalk formed by the gamma and epsilon chains, while a peripheral stalk is formed by the delta and b chains.

The protein localises to the cell inner membrane. In terms of biological role, f(1)F(0) ATP synthase produces ATP from ADP in the presence of a proton or sodium gradient. F-type ATPases consist of two structural domains, F(1) containing the extramembraneous catalytic core and F(0) containing the membrane proton channel, linked together by a central stalk and a peripheral stalk. During catalysis, ATP synthesis in the catalytic domain of F(1) is coupled via a rotary mechanism of the central stalk subunits to proton translocation. Functionally, component of the F(0) channel, it forms part of the peripheral stalk, linking F(1) to F(0). This Rhizobium etli (strain CIAT 652) protein is ATP synthase subunit b 1.